Consider the following 379-residue polypeptide: Lipoyl synthase 1, mitochondrial (379 aa).

[4Fe-4S] cluster-binding residues include Cys106, Cys111, Cys117, Cys137, Cys141, Cys144, and Ser352. The 220-residue stretch at 122 to 341 folds into the Radical SAM core domain; the sequence is EHGTQTATIM…EERGNELGFL (220 aa).

It belongs to the radical SAM superfamily. Lipoyl synthase family. Requires [4Fe-4S] cluster as cofactor.

It is found in the mitochondrion. The catalysed reaction is [[Fe-S] cluster scaffold protein carrying a second [4Fe-4S](2+) cluster] + N(6)-octanoyl-L-lysyl-[protein] + 2 oxidized [2Fe-2S]-[ferredoxin] + 2 S-adenosyl-L-methionine + 4 H(+) = [[Fe-S] cluster scaffold protein] + N(6)-[(R)-dihydrolipoyl]-L-lysyl-[protein] + 4 Fe(3+) + 2 hydrogen sulfide + 2 5'-deoxyadenosine + 2 L-methionine + 2 reduced [2Fe-2S]-[ferredoxin]. It functions in the pathway protein modification; protein lipoylation via endogenous pathway; protein N(6)-(lipoyl)lysine from octanoyl-[acyl-carrier-protein]: step 2/2. Its function is as follows. Catalyzes the radical-mediated insertion of two sulfur atoms into the C-6 and C-8 positions of the octanoyl moiety bound to the lipoyl domains of lipoate-dependent enzymes, thereby converting the octanoylated domains into lipoylated derivatives. This Drosophila yakuba (Fruit fly) protein is Lipoyl synthase 1, mitochondrial.